We begin with the raw amino-acid sequence, 332 residues long: Methionine import ATP-binding protein MetN (332 aa).

Positions 2-239 constitute an ABC transporter domain; it reads ITFQDVSKTY…PASDTARRFV (238 aa). Residue 36–43 coordinates ATP; the sequence is GASGAGKS.

Belongs to the ABC transporter superfamily. Methionine importer (TC 3.A.1.24) family. In terms of assembly, the complex is composed of two ATP-binding proteins (MetN), two transmembrane proteins (MetI) and a solute-binding protein (MetQ).

It localises to the cell inner membrane. The enzyme catalyses L-methionine(out) + ATP + H2O = L-methionine(in) + ADP + phosphate + H(+). It carries out the reaction D-methionine(out) + ATP + H2O = D-methionine(in) + ADP + phosphate + H(+). Part of the ABC transporter complex MetNIQ involved in methionine import. Responsible for energy coupling to the transport system. This Caulobacter vibrioides (strain ATCC 19089 / CIP 103742 / CB 15) (Caulobacter crescentus) protein is Methionine import ATP-binding protein MetN.